Reading from the N-terminus, the 220-residue chain is Early protein OPG038 (220 aa).

An N-terminal signal peptide occupies residues 1-17 (MVYKLVLLFCIASLGYS). Asparagine 49, asparagine 79, asparagine 118, and asparagine 154 each carry an N-linked (GlcNAc...) asparagine; by host glycan.

It belongs to the orthopoxvirus OPG038 family. In terms of assembly, homooligomer. Interacts with host CD80 and CD86 when secreted. In terms of processing, glycosylated by host.

It is found in the host endoplasmic reticulum. Its subcellular location is the secreted. Its function is as follows. Plays a role in immune evasion. When secreted, inhibits T-cell activation by preventing the binding of host CD80 and CD86 to soluble CTLA4 and CD28. In the infected cell, may inhibits host NF kappa B activation. The protein is Early protein OPG038 (OPG038) of Cynomys gunnisoni (Gunnison's prairie dog).